Here is a 916-residue protein sequence, read N- to C-terminus: MPPSSAAEGSTKRKKGGAAPHLKSRSKNARKLKRSAEDAEIAQLEQGIQAFVSPIDLKQFTQLPLSDRTCRGLKRAGYTDMTDIQAKSLSLSLKGKDVLGAARTGSGKTLAFLIPVLEILYRRKWGPSDGLGALVISPTRELAIQIFEVLRKIGSYHTFSAGLVIGGKDVKQEKDRLSRINILIATPGRLLQHMDQTLGFDTSNVQVLVLDEADRILDMGFSRTLNAIVENLPRNRQTMLFSATQTKRVKDLARLSLQDPEYVAVREPENEGCTPRGLEQHYMLVELEKKLDLLFSFIRTHTKCKALVFMSSCRQVQFVHETFCKLRPGVSLMALHGKQKQAKRLQIFTQFTKTQHALLFATDIAARGLDFPAVDWVIQLDVPEDVDTYIHRVGRTARYTAKGNSLLFVLPSEEKGILEALATKNIAIGRIKPKESKTQSIQNQLQAFAFQEPQIKHLAQKAFVSYVRSIHLQKNKEIFDVTALALEPFAAALGLPGAPKVKFVKEAAKAKKAAAYKAAQQQADDNSGQVKGDSDDEQAERADKNGKVRTKYDRMFERKNQDILSKHYANLIADDASSEQDSSNDSDTSDDDSVSVATTDNDDAEDREETRYGRSAGRRKENRLVGSDTSDSEEDESDDEQNDSGLHKIKSETKRSVMAARGDGDDGFLTLKRADHALEDDGDAYGIGGDDTRITMEQAKADATENLSKRKLAMGQSKKALALAGKRGIGEKLIFDEHGEAHALYELQDEEAFNKQGDAKTQAQRWAEEERERMQQADAKDKELAKEKRREKRRRQKEREKALERGDAPDNGDEGGSGDDDEEEEETGGRAVLAPIDNRSDGYETPDFDLTTEEDEDDDDDADDDDDDDDEAYRAPAPKRRKMAPSAGVTSQPSHSKKSKLEQEEELALRLLAGDA.

A disordered region spans residues 1–34; the sequence is MPPSSAAEGSTKRKKGGAAPHLKSRSKNARKLKR. Residues 12–33 show a composition bias toward basic residues; that stretch reads KRKKGGAAPHLKSRSKNARKLK. The Q motif signature appears at 58-86; the sequence is KQFTQLPLSDRTCRGLKRAGYTDMTDIQA. In terms of domain architecture, Helicase ATP-binding spans 89–263; sequence LSLSLKGKDV…RLSLQDPEYV (175 aa). ATP is bound at residue 102–109; it reads ARTGSGKT. The DEAD box signature appears at 211 to 214; that stretch reads DEAD. The region spanning 277–442 is the Helicase C-terminal domain; the sequence is GLEQHYMLVE…PKESKTQSIQ (166 aa). 3 disordered regions span residues 519–554, 575–667, and 752–916; these read AQQQ…KYDR, DASS…GDDG, and AFNK…AGDA. The segment covering 539–554 has biased composition (basic and acidic residues); sequence AERADKNGKVRTKYDR. The segment covering 576-593 has biased composition (acidic residues); it reads ASSEQDSSNDSDTSDDDS. The span at 608–623 shows a compositional bias: basic and acidic residues; sequence EETRYGRSAGRRKENR. Positions 630–642 are enriched in acidic residues; sequence SDSEEDESDDEQN. 3 stretches are compositionally biased toward basic and acidic residues: residues 645–655, 766–788, and 797–808; these read GLHKIKSETKR, WAEE…AKEK, and KEREKALERGDA. 2 stretches are compositionally biased toward acidic residues: residues 810–826 and 844–871; these read DNGD…EEEE and ETPD…DDDE.

This sequence belongs to the DEAD box helicase family. DDX10/DBP4 subfamily. Interacts with the U3 and U14 snoRNAs. Associates with pre-ribosomal complexes.

It localises to the nucleus. The protein resides in the nucleolus. It carries out the reaction ATP + H2O = ADP + phosphate + H(+). ATP-dependent RNA helicase required for ribosome biogenesis. Involved in the release of U14 snoRNA in pre-ribosomal complexes. Required for pre-rRNA cleavage at site A2. In Mycosarcoma maydis (Corn smut fungus), this protein is ATP-dependent RNA helicase DBP4 (DBP4).